A 196-amino-acid chain; its full sequence is Holliday junction branch migration complex subunit RuvA (196 aa).

The segment at 1-63 (MYEYFKGIIS…EDAELLYGFA (63 aa)) is domain I. A domain II region spans residues 64 to 142 (TEEEKQLFLS…AADGLAESKA (79 aa)). A flexible linker region spans residues 143–146 (PVQT). The tract at residues 147-196 (VDNQELEEAMEAMLALGYKATELKKIKKFFEGTTDTAENYIKSALKMLVK) is domain III.

The protein belongs to the RuvA family. As to quaternary structure, homotetramer. Forms an RuvA(8)-RuvB(12)-Holliday junction (HJ) complex. HJ DNA is sandwiched between 2 RuvA tetramers; dsDNA enters through RuvA and exits via RuvB. An RuvB hexamer assembles on each DNA strand where it exits the tetramer. Each RuvB hexamer is contacted by two RuvA subunits (via domain III) on 2 adjacent RuvB subunits; this complex drives branch migration. In the full resolvosome a probable DNA-RuvA(4)-RuvB(12)-RuvC(2) complex forms which resolves the HJ.

The protein resides in the cytoplasm. The RuvA-RuvB-RuvC complex processes Holliday junction (HJ) DNA during genetic recombination and DNA repair, while the RuvA-RuvB complex plays an important role in the rescue of blocked DNA replication forks via replication fork reversal (RFR). RuvA specifically binds to HJ cruciform DNA, conferring on it an open structure. The RuvB hexamer acts as an ATP-dependent pump, pulling dsDNA into and through the RuvAB complex. HJ branch migration allows RuvC to scan DNA until it finds its consensus sequence, where it cleaves and resolves the cruciform DNA. The sequence is that of Holliday junction branch migration complex subunit RuvA from Streptococcus gordonii (strain Challis / ATCC 35105 / BCRC 15272 / CH1 / DL1 / V288).